Consider the following 757-residue polypeptide: NAD(P)H-quinone oxidoreductase subunit 5, chloroplastic (757 aa).

Transmembrane regions (helical) follow at residues 9–29 (WIIP…LLLV), 40–60 (WAFP…DLSV), 89–109 (IDPL…MVLI), 122–139 (LRFF…LGLV), 147–167 (IYIF…FWFT), 185–205 (GDFG…SFEF), 219–239 (NGVN…GAVA), 258–278 (TPIS…FLVA), 280–300 (LLPL…IGVI), 327–347 (LGYI…FHLI), 354–374 (ALLF…VGYS), 396–416 (MTFL…CFWS), 425–445 (WLYS…TAFY), 544–564 (LLPL…GIPF), 607–627 (SIAY…YLFF), 692–712 (GIMN…KYLG), and 718–738 (SYLF…IFFF).

This sequence belongs to the complex I subunit 5 family. In terms of assembly, NDH is composed of at least 16 different subunits, 5 of which are encoded in the nucleus.

The protein localises to the plastid. It localises to the chloroplast thylakoid membrane. The enzyme catalyses a plastoquinone + NADH + (n+1) H(+)(in) = a plastoquinol + NAD(+) + n H(+)(out). It catalyses the reaction a plastoquinone + NADPH + (n+1) H(+)(in) = a plastoquinol + NADP(+) + n H(+)(out). Functionally, NDH shuttles electrons from NAD(P)H:plastoquinone, via FMN and iron-sulfur (Fe-S) centers, to quinones in the photosynthetic chain and possibly in a chloroplast respiratory chain. The immediate electron acceptor for the enzyme in this species is believed to be plastoquinone. Couples the redox reaction to proton translocation, and thus conserves the redox energy in a proton gradient. The chain is NAD(P)H-quinone oxidoreductase subunit 5, chloroplastic (ndhF) from Drimys granadensis.